The chain runs to 374 residues: Alanine racemase (374 aa).

Residue lysine 34 is the Proton acceptor; specific for D-alanine of the active site. Lysine 34 is subject to N6-(pyridoxal phosphate)lysine. Substrate is bound at residue arginine 147. Tyrosine 271 functions as the Proton acceptor; specific for L-alanine in the catalytic mechanism. Methionine 319 contributes to the substrate binding site.

This sequence belongs to the alanine racemase family. Requires pyridoxal 5'-phosphate as cofactor.

It carries out the reaction L-alanine = D-alanine. It functions in the pathway amino-acid biosynthesis; D-alanine biosynthesis; D-alanine from L-alanine: step 1/1. Its function is as follows. Catalyzes the interconversion of L-alanine and D-alanine. May also act on other amino acids. This is Alanine racemase (alr) from Actinobacillus pleuropneumoniae serotype 5b (strain L20).